Here is a 185-residue protein sequence, read N- to C-terminus: Translocon-associated protein subunit gamma (185 aa).

Methionine 1 is subject to N-acetylmethionine. The Lumenal portion of the chain corresponds to 1 to 27; sequence MAPKGSCKQQSEEDLLLQDFSRNLSAK. At serine 11 the chain carries Phosphoserine. A helical membrane pass occupies residues 28–48; that stretch reads SSALFFGNAFIVSAIPIWLYW. At 49–54 the chain is on the cytoplasmic side; sequence RIWHMD. A helical transmembrane segment spans residues 55 to 76; that stretch reads LIQSAVLYSVMTLVSTYLVAFA. Residues 77 to 135 are Lumenal-facing; that stretch reads YKNVKFVLKHKVAQKREDAVSKEVTRKLSEADNRKMSRKEKDERILWKKNEVADYEATT. Serine 105 is subject to Phosphoserine. The chain crosses the membrane as a helical span at residues 136 to 157; the sequence is FSIFYNNTLFLVVVIVASFFIL. Residues 158–163 lie on the Cytoplasmic side of the membrane; it reads KNFNPT. The chain crosses the membrane as a helical span at residues 164 to 184; sequence VNYILSISASSGLIALLSTGS.

This sequence belongs to the TRAP-gamma family. Heterotetramer of TRAP-alpha, TRAP-beta, TRAP-delta and TRAP-gamma.

The protein resides in the endoplasmic reticulum membrane. TRAP proteins are part of a complex whose function is to bind calcium to the ER membrane and thereby regulate the retention of ER resident proteins. This chain is Translocon-associated protein subunit gamma (SSR3), found in Pongo abelii (Sumatran orangutan).